The chain runs to 272 residues: tRNA pseudouridine synthase A (272 aa).

The active-site Nucleophile is the Asp-52. Tyr-110 contacts substrate.

The protein belongs to the tRNA pseudouridine synthase TruA family. Homodimer.

It catalyses the reaction uridine(38/39/40) in tRNA = pseudouridine(38/39/40) in tRNA. Functionally, formation of pseudouridine at positions 38, 39 and 40 in the anticodon stem and loop of transfer RNAs. This Cupriavidus necator (strain ATCC 17699 / DSM 428 / KCTC 22496 / NCIMB 10442 / H16 / Stanier 337) (Ralstonia eutropha) protein is tRNA pseudouridine synthase A.